The following is a 378-amino-acid chain: uncharacterized protein (378 aa).

Zn(2+) contacts are provided by cysteine 38, histidine 60, cysteine 90, cysteine 93, cysteine 96, and cysteine 104.

The protein belongs to the zinc-containing alcohol dehydrogenase family. Class-III subfamily. Zn(2+) serves as cofactor.

This is an uncharacterized protein from Bacillus subtilis (strain 168).